We begin with the raw amino-acid sequence, 547 residues long: MATKKTSLWLYDTTLRDGAQREGISLSLTDKLTIARRLDQLGIPFIEGGWPGANPKDVQFFWQLQEEPLEQAEIVAFCSTRRPHKAVETDKMLQAILSAGTRWVTIFGKSWDLHVLEGLQTSLAENLAMISDTIAYLRSQGRRVIYDAEHWFDGYRANPDYALATLATAQQAGAEWLVMCDTNGGTLPGQISEITTKVRRSLGLDGQSDRQPQLGIHAHNDSGTAVANSLLAVEAGATMVQGTINGYGERCGNANLCTLIPNLQLKLDYDCIEPEKLAHLTSTSRLISEIVNLAPDDHAPFVGRSAFAHKGGIHVSAVQRNPFTYEHIAPNLVGNERRIVVSEQAGLSNVLSKAELFGIALDRQNPACRTILATLKDLEQQGYQFEAAEASFELLMRQAMGDRQPLFLVQGFQVHCDLLTPAENPAYRNALATVKVTVNGQNILEVAEGNGPVSALDQALRKALTRFYPQIADFHLTDYKVRILDGGAGTSAKTRVLVESSNGDRRWTTVGVSGNILEASYQAVVEGIEYGLRLLTCGLTNQEAISS.

Residues Leu-8 to Ala-278 form the Pyruvate carboxyltransferase domain.

It belongs to the alpha-IPM synthase/homocitrate synthase family.

The catalysed reaction is pyruvate + acetyl-CoA + H2O = (3R)-citramalate + CoA + H(+). It functions in the pathway amino-acid biosynthesis; L-isoleucine biosynthesis; 2-oxobutanoate from pyruvate: step 1/3. Catalyzes the condensation of pyruvate and acetyl-coenzyme A to form (R)-citramalate. In Synechocystis sp. (strain ATCC 27184 / PCC 6803 / Kazusa), this protein is (R)-citramalate synthase.